We begin with the raw amino-acid sequence, 483 residues long: Xylulose kinase (483 aa).

Residue 77 to 78 (MH) participates in substrate binding. The Proton acceptor role is filled by aspartate 233.

This sequence belongs to the FGGY kinase family.

The enzyme catalyses D-xylulose + ATP = D-xylulose 5-phosphate + ADP + H(+). Catalyzes the phosphorylation of D-xylulose to D-xylulose 5-phosphate. The polypeptide is Xylulose kinase (Klebsiella pneumoniae).